Consider the following 127-residue polypeptide: Small ribosomal subunit protein uS11 (127 aa).

This sequence belongs to the universal ribosomal protein uS11 family. In terms of assembly, part of the 30S ribosomal subunit. Interacts with proteins S7 and S18. Binds to IF-3.

Functionally, located on the platform of the 30S subunit, it bridges several disparate RNA helices of the 16S rRNA. Forms part of the Shine-Dalgarno cleft in the 70S ribosome. The polypeptide is Small ribosomal subunit protein uS11 (Flavobacterium johnsoniae (strain ATCC 17061 / DSM 2064 / JCM 8514 / BCRC 14874 / CCUG 350202 / NBRC 14942 / NCIMB 11054 / UW101) (Cytophaga johnsonae)).